The following is a 259-amino-acid chain: Pimeloyl-[acyl-carrier protein] methyl ester esterase (259 aa).

Residues 15–242 (HLVLLHGWGL…AAHAPFISHP (228 aa)) form the AB hydrolase-1 domain. Substrate is bound by residues W22, 82 to 83 (SL), and 143 to 147 (FLALQ). S82 (nucleophile) is an active-site residue. Catalysis depends on residues D207 and H235. Residue H235 participates in substrate binding.

Belongs to the AB hydrolase superfamily. Carboxylesterase BioH family. As to quaternary structure, monomer.

The protein resides in the cytoplasm. It carries out the reaction 6-carboxyhexanoyl-[ACP] methyl ester + H2O = 6-carboxyhexanoyl-[ACP] + methanol + H(+). It participates in cofactor biosynthesis; biotin biosynthesis. The physiological role of BioH is to remove the methyl group introduced by BioC when the pimeloyl moiety is complete. It allows to synthesize pimeloyl-ACP via the fatty acid synthetic pathway through the hydrolysis of the ester bonds of pimeloyl-ACP esters. The protein is Pimeloyl-[acyl-carrier protein] methyl ester esterase of Cronobacter sakazakii (strain ATCC BAA-894) (Enterobacter sakazakii).